The sequence spans 429 residues: Enolase (429 aa).

Gln163 is a (2R)-2-phosphoglycerate binding site. Glu205 functions as the Proton donor in the catalytic mechanism. 3 residues coordinate Mg(2+): Asp242, Glu286, and Asp313. (2R)-2-phosphoglycerate contacts are provided by Lys338, Arg367, Ser368, and Lys389. Lys338 (proton acceptor) is an active-site residue.

The protein belongs to the enolase family. Requires Mg(2+) as cofactor.

Its subcellular location is the cytoplasm. The protein localises to the secreted. It localises to the cell surface. It catalyses the reaction (2R)-2-phosphoglycerate = phosphoenolpyruvate + H2O. It participates in carbohydrate degradation; glycolysis; pyruvate from D-glyceraldehyde 3-phosphate: step 4/5. In terms of biological role, catalyzes the reversible conversion of 2-phosphoglycerate (2-PG) into phosphoenolpyruvate (PEP). It is essential for the degradation of carbohydrates via glycolysis. In Geobacter metallireducens (strain ATCC 53774 / DSM 7210 / GS-15), this protein is Enolase.